The chain runs to 585 residues: Arginine--tRNA ligase (585 aa).

The 'HIGH' region signature appears at 131–141 (ANPTGPMHVGH).

It belongs to the class-I aminoacyl-tRNA synthetase family. In terms of assembly, monomer.

The protein resides in the cytoplasm. The enzyme catalyses tRNA(Arg) + L-arginine + ATP = L-arginyl-tRNA(Arg) + AMP + diphosphate. This chain is Arginine--tRNA ligase, found in Bartonella tribocorum (strain CIP 105476 / IBS 506).